The primary structure comprises 278 residues: Elongation factor Ts (278 aa).

The interval threonine 82–valine 85 is involved in Mg(2+) ion dislocation from EF-Tu.

Belongs to the EF-Ts family.

The protein resides in the cytoplasm. Its function is as follows. Associates with the EF-Tu.GDP complex and induces the exchange of GDP to GTP. It remains bound to the aminoacyl-tRNA.EF-Tu.GTP complex up to the GTP hydrolysis stage on the ribosome. The polypeptide is Elongation factor Ts (Streptomyces griseus subsp. griseus (strain JCM 4626 / CBS 651.72 / NBRC 13350 / KCC S-0626 / ISP 5235)).